The chain runs to 140 residues: HTH-type transcriptional regulator AdhR (140 aa).

Residues 1 to 69 form the HTH merR-type domain; sequence MNIAQVAKQF…IEALIEYTTL (69 aa). Positions 3–22 form a DNA-binding region, H-T-H motif; the sequence is IAQVAKQFGLTAATLRYYER. Residues 75 to 125 adopt a coiled-coil conformation; sequence RTVEARKNILADERQRLIEKRKEIDETIKRLDTKIKDYDGKLRENEAKLKS. The segment at 120–140 is disordered; it reads EAKLKSRPKTESLHGSVEQRR.

Its function is as follows. Transcriptional regulator involved in the response to aldehyde stress. Binds to the promoter region of the adhA-yraA operon, the yraC and its own promoter region; binding is unchanged in the presence of aldehydes. This Bacillus subtilis (strain 168) protein is HTH-type transcriptional regulator AdhR (adhR).